The chain runs to 328 residues: Mitochondrial thiamine pyrophosphate carrier 1 (328 aa).

Solcar repeat units lie at residues 12–110 (GTRR…TTQL), 120–208 (PQPI…LRPV), and 221–316 (PPGS…ALKL). The next 6 membrane-spanning stretches (helical) occupy residues 17–37 (VVLAGGIAGLISRFCIAPLDV), 79–99 (LTGLWKGNIPAELLYVCYGGI), 126–146 (FISGALGGGIATAATYPLDLL), 185–205 (SAAVGQIVPYMGLFFATYEAL), 227–247 (AAAGIVASVLAKTGVFPLDLV), and 291–308 (GLTVSLVKAAPASAVTMW).

The protein belongs to the mitochondrial carrier (TC 2.A.29) family.

The protein resides in the mitochondrion inner membrane. Mitochondrial transporter that mediates uptake of thiamine pyrophosphate (ThPP) into mitochondria. This chain is Mitochondrial thiamine pyrophosphate carrier 1 (tpc1), found in Emericella nidulans (strain FGSC A4 / ATCC 38163 / CBS 112.46 / NRRL 194 / M139) (Aspergillus nidulans).